The chain runs to 133 residues: Large ribosomal subunit protein bL17 (133 aa).

The protein belongs to the bacterial ribosomal protein bL17 family. As to quaternary structure, part of the 50S ribosomal subunit. Contacts protein L32.

The protein is Large ribosomal subunit protein bL17 of Nitratidesulfovibrio vulgaris (strain DSM 19637 / Miyazaki F) (Desulfovibrio vulgaris).